The primary structure comprises 799 residues: MEELEILRKKLYSIQRQDNTQKLSERNCIEIIVKMIDLKMIDIIHSLDGKEYITPKQLENEIKDEILKCGGRVVVCDLQSILSIDIIHIEEALEKLKKRDKSIQIYQGEIMTRYYLDSILQEIQEQLQEVGKLHINDLSNRFSIGVDFLINLIEQNLKKFNRSLNNSTNNNNNNNNILLKNIIFDNQEVLYTQSHINRHYHKVIGLFSSITQPILINNVIKQHQNHYQLNERLVRQQLQELIENKRINGFIQGKASNAEFIPTIFSQSRLKWIDSFYHQNQFITFDSVSKLQINEPQSFLKNTFTDGLLLHSCFIHKSLIDKIDDNIIEIIENSNWLDLIPLLPPLTDKDISMIVSNCPNMKTNNAILLGNSFIISKSFVDRCFTLLQKTIQERMEKQQLILENIASSNIKKQQQSKSEIIDQKIETTTTTTTTTQPSKKKDNLINSDDDDNQDNNKKSSKGKNKKSKQQQSSIQKLINDSEDDYKVYNKKQENNNNNKKVDHLKEINQLLSKWYENMEEELVESLSQYLRPLVNQSWESMVKEAKEKLENETQKQRKQQLQQLNSQFFSLYNSFLLFRKGLQSLNDADDDNGKTIIALEKHLLKTVGINITNLLIEINANYHMLDKTTFETPSERSLILSQFPPQLSKSFEKLIQSLNKSTLNDFIDSLENVCSQSQIKLKSLDKKLEKQLLIENQNELEEQFLNEIDVGNQFQIIVNLMYIRYKNNYIFSPPRLIGKLVSTLVMDTSIDKEIITRLTKLHQEIVKLITNNKLSNQDNDNDSTELNDHIKFFKDLILN.

The disordered stretch occupies residues Thr429–Asp483. Positions Lys458–Lys468 are enriched in basic residues. Positions Gln469–Ile478 are enriched in low complexity.

This sequence belongs to the UFL1 family.

Its function is as follows. E3 UFM1-protein ligase that mediates ufmylation of target proteins. The protein is E3 UFM1-protein ligase 1 homolog of Dictyostelium discoideum (Social amoeba).